The sequence spans 298 residues: N-acetylmuramic acid 6-phosphate etherase (298 aa).

The SIS domain occupies 55–218 (IHAQVSGGGR…STGLMIKSGK (164 aa)). Glu-83 (proton donor) is an active-site residue. The active site involves Glu-114.

This sequence belongs to the GCKR-like family. MurNAc-6-P etherase subfamily. As to quaternary structure, homodimer.

The enzyme catalyses N-acetyl-D-muramate 6-phosphate + H2O = N-acetyl-D-glucosamine 6-phosphate + (R)-lactate. It functions in the pathway amino-sugar metabolism; 1,6-anhydro-N-acetylmuramate degradation. Its pathway is amino-sugar metabolism; N-acetylmuramate degradation. The protein operates within cell wall biogenesis; peptidoglycan recycling. Its function is as follows. Specifically catalyzes the cleavage of the D-lactyl ether substituent of MurNAc 6-phosphate, producing GlcNAc 6-phosphate and D-lactate. Together with AnmK, is also required for the utilization of anhydro-N-acetylmuramic acid (anhMurNAc) either imported from the medium or derived from its own cell wall murein, and thus plays a role in cell wall recycling. The protein is N-acetylmuramic acid 6-phosphate etherase of Escherichia coli O81 (strain ED1a).